We begin with the raw amino-acid sequence, 235 residues long: MAPSFIFVEDRPAPLDATSDPPSLFDGTTRLYTSYVCPFAQRVWITRNFKGLQEKIKLVPLDLGNRPAWYKEKVYPENKVPALEHNGKIIGESLDLIKYLDNTFEGPSLYPEDHAKREFGDELLKYTDTFVKTMYVSLKGDPSKETAPVLDYLENALYKFDDGPFFLGQLSLVDIAYIPFIERFQTVLNELFKCDITAERPKLSAWIEEINKSDGYAQTKMDPKEIVEVFKKKFM.

A GST N-terminal domain is found at Gly27–Ser108. Residues Cys37 to Pro38, Asn65 to Arg66, Lys79 to Val80, and Glu92 to Ser93 contribute to the glutathione site. A GST C-terminal domain is found at Asn86–Phe230.

The protein belongs to the GST superfamily. Lambda family.

The protein localises to the cytoplasm. Its subcellular location is the cytosol. The catalysed reaction is RX + glutathione = an S-substituted glutathione + a halide anion + H(+). Catalyzes the glutathione-dependent reduction of S-glutathionylquercetin to quercetin. In Arabidopsis thaliana (Mouse-ear cress), this protein is Glutathione S-transferase L3 (GSTL3).